Here is a 169-residue protein sequence, read N- to C-terminus: Orotate phosphoribosyltransferase (169 aa).

5-phospho-alpha-D-ribose 1-diphosphate is bound by residues Arg86, Lys90, His92, and 111–119; that span reads EDVTTSGGS. Residues Thr115 and Arg143 each contribute to the orotate site.

The protein belongs to the purine/pyrimidine phosphoribosyltransferase family. PyrE subfamily. As to quaternary structure, homodimer. It depends on Mg(2+) as a cofactor.

The enzyme catalyses orotidine 5'-phosphate + diphosphate = orotate + 5-phospho-alpha-D-ribose 1-diphosphate. It participates in pyrimidine metabolism; UMP biosynthesis via de novo pathway; UMP from orotate: step 1/2. Its function is as follows. Catalyzes the transfer of a ribosyl phosphate group from 5-phosphoribose 1-diphosphate to orotate, leading to the formation of orotidine monophosphate (OMP). This chain is Orotate phosphoribosyltransferase, found in Methanocorpusculum labreanum (strain ATCC 43576 / DSM 4855 / Z).